The primary structure comprises 129 residues: MAELIQKKLQGEVEKYQQLQKDLSKSMSGRQKLEAQLTENNIVKEELALLDGSNVVFKLLGPVLVKQELGEARATVGKRLDYITAEIKRYESQLRDLERQSEQQRETLAQLQQEFQRAQAAKAGAPGKA.

Position 2 is an N-acetylalanine (alanine 2). Residue lysine 21 is modified to N6-acetyllysine. Lysine 66 is subject to N6-acetyllysine; alternate. Lysine 66 is covalently cross-linked (Glycyl lysine isopeptide (Lys-Gly) (interchain with G-Cter in SUMO1); alternate). Residue lysine 66 forms a Glycyl lysine isopeptide (Lys-Gly) (interchain with G-Cter in SUMO2); alternate linkage.

It belongs to the prefoldin subunit beta family. In terms of assembly, heterohexamer of two PFD-alpha type and four PFD-beta type subunits. Component of the PAQosome complex which is responsible for the biogenesis of several protein complexes and which consists of R2TP complex members RUVBL1, RUVBL2, RPAP3 and PIH1D1, URI complex members PFDN2, PFDN6, PDRG1, UXT and URI1 as well as ASDURF, POLR2E and DNAAF10/WDR92.

In terms of biological role, binds specifically to cytosolic chaperonin (c-CPN) and transfers target proteins to it. Binds to nascent polypeptide chain and promotes folding in an environment in which there are many competing pathways for nonnative proteins. This chain is Prefoldin subunit 6 (PFDN6), found in Homo sapiens (Human).